We begin with the raw amino-acid sequence, 264 residues long: MKKIMMIGYGAMAREVLSRLPDGVSVGWILARAAHHAAIDSAFGGQVQALTHPDQCTEQPDLVLECASQQAVAEFGEAVVTRGWPLAVISTGALADAALQQRLQQACRQHQGQLIVLSGAVAGMDGLASAREGGLDSVTYQACKSPASWRGSMAEQLIDLDAVSEAQVFFEGSAREAARLFPANANVAATIALNGLGMDATRVRLLVDPATRRNTHRLQVCGNFGEFQIELSGNPLASNPKTSTLAALSAVQACRRLVDGGFIA.

NAD(+) is bound by residues A120 and N186. The active site involves H216.

The protein belongs to the L-aspartate dehydrogenase family.

The catalysed reaction is L-aspartate + NADP(+) + H2O = oxaloacetate + NH4(+) + NADPH + H(+). It carries out the reaction L-aspartate + NAD(+) + H2O = oxaloacetate + NH4(+) + NADH + H(+). It participates in cofactor biosynthesis; NAD(+) biosynthesis; iminoaspartate from L-aspartate (dehydrogenase route): step 1/1. In terms of biological role, specifically catalyzes the NAD or NADP-dependent dehydrogenation of L-aspartate to iminoaspartate. This is L-aspartate dehydrogenase from Serratia proteamaculans (strain 568).